The sequence spans 284 residues: Tryptophan synthase alpha chain (284 aa).

Catalysis depends on proton acceptor residues Glu59 and Asp70.

This sequence belongs to the TrpA family. In terms of assembly, tetramer of two alpha and two beta chains.

The catalysed reaction is (1S,2R)-1-C-(indol-3-yl)glycerol 3-phosphate + L-serine = D-glyceraldehyde 3-phosphate + L-tryptophan + H2O. It participates in amino-acid biosynthesis; L-tryptophan biosynthesis; L-tryptophan from chorismate: step 5/5. Its function is as follows. The alpha subunit is responsible for the aldol cleavage of indoleglycerol phosphate to indole and glyceraldehyde 3-phosphate. This chain is Tryptophan synthase alpha chain, found in Azospirillum brasilense.